The chain runs to 286 residues: Quinone oxidoreductase 2 (286 aa).

NADP(+) contacts are provided by residues 6-11 (GATGQL), R33, 73-75 (SSS), 138-143 (GWYSEN), and R171.

It belongs to the NmrA-type oxidoreductase family. Monomer.

The enzyme catalyses a quinone + NADH + H(+) = a quinol + NAD(+). The catalysed reaction is a quinone + NADPH + H(+) = a quinol + NADP(+). Functionally, quinone oxidoreductase that may play some additional role beyond quinone reduction. Potential redox sensor protein. Overexpression induces retardation of growth. The sequence is that of Quinone oxidoreductase 2 (qorB) from Escherichia coli (strain K12).